A 130-amino-acid polypeptide reads, in one-letter code: Protein ApaG (130 aa).

The ApaG domain maps to 3–127; sequence SAVTQDIQIT…FSLDSPFVRR (125 aa).

In Methylocella silvestris (strain DSM 15510 / CIP 108128 / LMG 27833 / NCIMB 13906 / BL2), this protein is Protein ApaG.